Consider the following 100-residue polypeptide: Small ribosomal subunit protein uS14c (100 aa).

This sequence belongs to the universal ribosomal protein uS14 family. As to quaternary structure, part of the 30S ribosomal subunit.

The protein resides in the plastid. Its subcellular location is the chloroplast. Its function is as follows. Binds 16S rRNA, required for the assembly of 30S particles. The protein is Small ribosomal subunit protein uS14c of Illicium oligandrum (Star anise).